Reading from the N-terminus, the 37-residue chain is Large ribosomal subunit protein bL36 (37 aa).

It belongs to the bacterial ribosomal protein bL36 family.

In Bordetella bronchiseptica (strain ATCC BAA-588 / NCTC 13252 / RB50) (Alcaligenes bronchisepticus), this protein is Large ribosomal subunit protein bL36.